Consider the following 499-residue polypeptide: Putative antiporter subunit mnhD2 (499 aa).

14 helical membrane passes run 1–21 (MSNL…ILVF), 31–51 (ILSI…LIYV), 77–97 (LSLL…AYGF), 107–127 (FHLP…FLTS), 129–149 (LFNL…LVTL), 160–180 (IVYV…IGML), 208–228 (ISLV…FMWL), 239–259 (LAAL…IRFF), 272–292 (TLLV…VIAY), 307–327 (IGFI…GAIF), 329–349 (LAND…LVYM), 367–387 (FFGV…PFSG), 402–422 (GNYI…YSLF), and 449–469 (GLLS…PVVL).

This sequence belongs to the CPA3 antiporters (TC 2.A.63) subunit D family. In terms of assembly, may form a heterooligomeric complex that consists of seven subunits: mnhA2, mnhB2, mnhC2, mnhD2, mnhE2, mnhF2 and mnhG2.

Its subcellular location is the cell membrane. The polypeptide is Putative antiporter subunit mnhD2 (mnhD2) (Staphylococcus epidermidis (strain ATCC 35984 / DSM 28319 / BCRC 17069 / CCUG 31568 / BM 3577 / RP62A)).